The primary structure comprises 673 residues: F-box/LRR-repeat protein 17 (673 aa).

The interval 1–39 is disordered; it reads MGHVAPHASKKEHVAPHAAEKDHVAPHASKKEHVAPHAA. Residues 9–39 show a composition bias toward basic and acidic residues; sequence SKKEHVAPHAAEKDHVAPHASKKEHVAPHAA. In terms of domain architecture, F-box spans 291 to 338; it reads PLHINQLPSSLLLKIFSNLSLNERCILASLVCKYWRDLCLDSQFWKQL.

Belongs to the FBXL17 family. As to quaternary structure, part of the SCF (SKP1-CUL1-F-box) E3 ubiquitin-protein ligase complex SCF(FBXL17). Interacts with BTB domain-containing proteins; specifically recognizes and binds a conserved degron of non-consecutive residues present at the interface of BTB dimers of aberrant composition. As to expression, expressed in the neuro-ectoderm of embryos.

It localises to the cytoplasm. The protein localises to the nucleus. In terms of biological role, substrate-recognition component of the SCF(FBXL17) E3 ubiquitin ligase complex, a key component of a quality control pathway required to ensure functional dimerization of BTB domain-containing proteins (dimerization quality control, DQC). FBXL17 specifically recognizes and binds a conserved degron of non-consecutive residues present at the interface of BTB dimers of aberrant composition: aberrant BTB dimer are then ubiquitinated by the SCF(FBXL17) complex and degraded by the proteasome. The ability of the SCF(FBXL17) complex to eliminate compromised BTB dimers is required for the differentiation and survival of neural crest and neuronal cells. The protein is F-box/LRR-repeat protein 17 of Xenopus laevis (African clawed frog).